A 263-amino-acid chain; its full sequence is uncharacterized protein (263 aa).

Residues 198–224 are disordered; the sequence is KRSSDSFVSLKPGEDEHSPLEISTCGN.

This is an uncharacterized protein from Saccharomyces cerevisiae (strain ATCC 204508 / S288c) (Baker's yeast).